The chain runs to 526 residues: MQQKILILDFGSQYTQLIARRIREANVYCELHSWDVSDAFIREFNPAGVILSGGPNSVYEDETPRAPQSVFELGVPVLGICYGMQTMAAQLGGSVENAAKREFGYAEIRAQGHSALLKGIQDKSNAEGHGLLDVWMSHGDKVTALPEGFKIIASNSATPIAGMADENRRFYAVQFHPEVTHTKQGKALLNRFVHDICGCDQSWNMPDYVETAVQRIREEVGCDEVILGLSGGVDSSVAAALIHRAIGDQLTCVFVDNGLLRLNEAEQVMETFGKNLGVKVIHVDASAKFLGDLSGVNDPEAKRKIIGREFVEVFQQEAAKLPQAKWLAQGTIYPDVIESAGAKTKKAHTIKSHHNVGGLPDTLKLKLLEPLRELFKDEVRELGIALGLPHDMVYRHPFPGPGLGVRILGEVKREYADLLRQADHIFIEELRSTKDADGKSWYDKTSQAFAVFLPVKSVGVMGDGRTYDYVVALRAVVTTDFMTAHWAELPYDLLGKVSNRIINEVRGINRVVYDISGKPPATIEWE.

Residues 4–202 form the Glutamine amidotransferase type-1 domain; it reads KILILDFGSQ…VHDICGCDQS (199 aa). Residue cysteine 81 is the Nucleophile of the active site. Catalysis depends on residues histidine 176 and glutamate 178. Residues 203–395 form the GMPS ATP-PPase domain; sequence WNMPDYVETA…LGLPHDMVYR (193 aa). Residue 230-236 coordinates ATP; the sequence is SGGVDSS.

In terms of assembly, homodimer.

It carries out the reaction XMP + L-glutamine + ATP + H2O = GMP + L-glutamate + AMP + diphosphate + 2 H(+). It functions in the pathway purine metabolism; GMP biosynthesis; GMP from XMP (L-Gln route): step 1/1. Functionally, catalyzes the synthesis of GMP from XMP. This is GMP synthase [glutamine-hydrolyzing] from Methylobacillus flagellatus (strain ATCC 51484 / DSM 6875 / VKM B-1610 / KT).